Here is a 255-residue protein sequence, read N- to C-terminus: MSLSIRVNEKAFGKGSFKTSVLQDVNLTVENGEFLTVIGPSGCGKSTLLKIAAGLDGDYEGRISMNGREIKGPGIQQGFIFQEHRLFPWMTVEQNIAADLSLKEPAVRKKVDELIETVRLKGAEKQYPRELSGGMSQRVAIARALLREPEILLLDEPFGALDAFTRKHLQDVLTDIWREKKMTMILVTHDIDESVYLANRIAILTAKPGRIHKLIPVDLPFPRSRTSPVFQTIRQKVLKEFETTETFSFQEGSGI.

The region spanning 5–231 (IRVNEKAFGK…PRSRTSPVFQ (227 aa)) is the ABC transporter domain. 39–46 (GPSGCGKS) lines the ATP pocket.

It belongs to the ABC transporter superfamily. Aliphatic sulfonates importer (TC 3.A.1.17.2) family. In terms of assembly, the complex is composed of two ATP-binding proteins (SsuB), two transmembrane proteins (SsuC) and a solute-binding protein (SsuA).

The protein resides in the cell membrane. It carries out the reaction ATP + H2O + aliphatic sulfonate-[sulfonate-binding protein]Side 1 = ADP + phosphate + aliphatic sulfonateSide 2 + [sulfonate-binding protein]Side 1.. Functionally, part of the ABC transporter complex SsuABC involved in aliphatic sulfonates import. Responsible for energy coupling to the transport system. This chain is Aliphatic sulfonates import ATP-binding protein SsuB, found in Bacillus licheniformis (strain ATCC 14580 / DSM 13 / JCM 2505 / CCUG 7422 / NBRC 12200 / NCIMB 9375 / NCTC 10341 / NRRL NRS-1264 / Gibson 46).